Reading from the N-terminus, the 66-residue chain is Beta-mammal toxin Co2 (66 aa).

The LCN-type CS-alpha/beta domain maps to 1 to 66; it reads KEGYIVNYHD…VWPLPKKRCN (66 aa). Cystine bridges form between cysteine 12–cysteine 65, cysteine 16–cysteine 41, cysteine 25–cysteine 46, and cysteine 29–cysteine 48.

In terms of tissue distribution, expressed by the venom gland.

Its subcellular location is the secreted. Its function is as follows. Beta toxins bind voltage-independently at site-4 of sodium channels (Nav) and shift the voltage of activation toward more negative potentials thereby affecting sodium channel activation and promoting spontaneous and repetitive firing. This toxin acts on human Nav1.1/SCN1A, Nav1.2/SCN2A, Nav1.4/SCN4A and Nav1.6/SCN8A voltage-gated sodium channels. Also, it reduces the peak of sodium currents in Nav1.5/SCN5A at all potentials. In vivo, is lethal to mice when intraperitoneally injected at a dose of 5ug. No activity is observed when injected into crickets or woodlice. The chain is Beta-mammal toxin Co2 from Centruroides ornatus (Scorpion).